Consider the following 242-residue polypeptide: Probable transcriptional regulatory protein Bmul_0984/BMULJ_02280 (242 aa).

It belongs to the TACO1 family.

It is found in the cytoplasm. The protein is Probable transcriptional regulatory protein Bmul_0984/BMULJ_02280 of Burkholderia multivorans (strain ATCC 17616 / 249).